Here is a 555-residue protein sequence, read N- to C-terminus: MKSDIEIAQEAKMLHIRDVAAKLGIEEDYLEYYGKYKAKISPALWDKIKDRKDGKLILVTAITPTPAGEGKTTTTVGLGQALAKLGKKAMIALREPSLGPSFGIKGGAAGGGYSQVVPMEDINLHFTGDIHAITAAHNLLAAMIDNHIHHGNELNIDIRTITWKRAMDMNDRALREIIVGLGGKANGYPRQDGFIITVASEIMAILCLSHDLMDLKRRLGDIIVAYDKDGSPVTARDLKADGAMAVLLKDAIKPNLVQTIENVPAFVHGGPFANIAHGCNSLIATKYGLKLADYLVTEAGFGADLGAEKFFDVKARFGGLTPNAAVVVATVRALKMHGGVKKEDLQKEDVEAVRRGIENLEKQVENVRKFGVPVVVALNKFVFDTEREIEEVRKACDRIGVDMAVAEVWEKGGEGGIELAEKVIKAADTPSNFRFLYDVNLPIKDKLHIIATEIYGADGVEYTASALKDIANIEKLGLDKMPIVVAKTQYSLSDDPKLLGRPRGFKITVRELRISRGAGFIVALTGDIMTMPGLPKHPAAENIDIDENGRIKGLF.

Position 65-72 (65-72) interacts with ATP; sequence TPAGEGKT.

The protein belongs to the formate--tetrahydrofolate ligase family.

The catalysed reaction is (6S)-5,6,7,8-tetrahydrofolate + formate + ATP = (6R)-10-formyltetrahydrofolate + ADP + phosphate. It participates in one-carbon metabolism; tetrahydrofolate interconversion. The sequence is that of Formate--tetrahydrofolate ligase from Caldanaerobacter subterraneus subsp. tengcongensis (strain DSM 15242 / JCM 11007 / NBRC 100824 / MB4) (Thermoanaerobacter tengcongensis).